The following is a 198-amino-acid chain: Probable chorismate pyruvate-lyase (198 aa).

Residues R76, L114, and E172 each contribute to the substrate site.

It belongs to the UbiC family.

The protein resides in the cytoplasm. It carries out the reaction chorismate = 4-hydroxybenzoate + pyruvate. Its pathway is cofactor biosynthesis; ubiquinone biosynthesis. In terms of biological role, removes the pyruvyl group from chorismate, with concomitant aromatization of the ring, to provide 4-hydroxybenzoate (4HB) for the ubiquinone pathway. The sequence is that of Probable chorismate pyruvate-lyase from Bordetella avium (strain 197N).